Consider the following 327-residue polypeptide: ATPase GET3 (327 aa).

An ATP-binding site is contributed by K27 to T34. The active site involves D56. Positions 231 and 258 each coordinate ATP. Zn(2+)-binding residues include C269 and C272.

The protein belongs to the arsA ATPase family. In terms of assembly, homodimer. Component of the Golgi to ER traffic (GET) complex, which is composed of GET1, GET2 and GET3. Within the complex, GET1 and GET2 form a heterotetramer which is stabilized by phosphatidylinositol binding and which binds to the GET3 homodimer. Interacts with the chloride channel protein GEF1.

It is found in the cytoplasm. The protein localises to the endoplasmic reticulum. Its subcellular location is the golgi apparatus. Functionally, ATPase required for the post-translational delivery of tail-anchored (TA) proteins to the endoplasmic reticulum. Recognizes and selectively binds the transmembrane domain of TA proteins in the cytosol. This complex then targets to the endoplasmic reticulum by membrane-bound receptors GET1 and GET2, where the tail-anchored protein is released for insertion. This process is regulated by ATP binding and hydrolysis. ATP binding drives the homodimer towards the closed dimer state, facilitating recognition of newly synthesized TA membrane proteins. ATP hydrolysis is required for insertion. Subsequently, the homodimer reverts towards the open dimer state, lowering its affinity for the GET1-GET2 receptor, and returning it to the cytosol to initiate a new round of targeting. Cooperates with the HDEL receptor ERD2 to mediate the ATP-dependent retrieval of resident ER proteins that contain a C-terminal H-D-E-L retention signal from the Golgi to the ER. Involved in low-level resistance to the oxyanions arsenite and arsenate, and in heat tolerance. This is ATPase GET3 from Yarrowia lipolytica (strain CLIB 122 / E 150) (Yeast).